A 155-amino-acid polypeptide reads, in one-letter code: UPF0251 protein Paes_1249 (155 aa).

Belongs to the UPF0251 family.

The polypeptide is UPF0251 protein Paes_1249 (Prosthecochloris aestuarii (strain DSM 271 / SK 413)).